Reading from the N-terminus, the 52-residue chain is Defensin D2 (52 aa).

Disulfide bonds link Cys-8–Cys-52, Cys-19–Cys-39, Cys-25–Cys-46, and Cys-29–Cys-48.

As to expression, distributed in the epidermal cell layer of leaves and in the subepidermal layer region of stems. Not in roots.

It is found in the secreted. It localises to the cell wall. In terms of biological role, antimicrobial peptide. Active against Fusarium spp., Gram-positive and Gram-negative bacterial pathogens. The protein is Defensin D2 of Spinacia oleracea (Spinach).